The following is a 682-amino-acid chain: DNA-directed RNA polymerase subunit beta' (682 aa).

Residues C69, C71, C87, and C90 each coordinate Zn(2+). D489, D491, and D493 together coordinate Mg(2+).

It belongs to the RNA polymerase beta' chain family. RpoC1 subfamily. As to quaternary structure, in plastids the minimal PEP RNA polymerase catalytic core is composed of four subunits: alpha, beta, beta', and beta''. When a (nuclear-encoded) sigma factor is associated with the core the holoenzyme is formed, which can initiate transcription. Mg(2+) is required as a cofactor. The cofactor is Zn(2+).

It is found in the plastid. Its subcellular location is the chloroplast. It catalyses the reaction RNA(n) + a ribonucleoside 5'-triphosphate = RNA(n+1) + diphosphate. Its function is as follows. DNA-dependent RNA polymerase catalyzes the transcription of DNA into RNA using the four ribonucleoside triphosphates as substrates. The protein is DNA-directed RNA polymerase subunit beta' of Hordeum vulgare (Barley).